A 347-amino-acid polypeptide reads, in one-letter code: Endophilin-A3 (347 aa).

The membrane-binding amphipathic helix stretch occupies residues 1–21 (MSVAGLKKQFHKASQLFSEKI). In terms of domain architecture, BAR spans 18–249 (SEKISGAEGT…LELRISLASK (232 aa)). Residues 60–87 (PNPAYRAKLGMLNTVSKLRGQVKATGYP) form a required for dimerization upon membrane association region. A coiled-coil region spans residues 180-201 (EEEIRQAVEKFEESKELAERSM). The interaction with ARC stretch occupies residues 218 to 254 (FVEAALDYHRQSTEILQELQSKLELRISLASKVPKRE). The interval 255-288 (FMPKPVNMSSTDANGVGPSSSSKTPGTDTPADQP) is disordered. Polar residues predominate over residues 261–281 (NMSSTDANGVGPSSSSKTPGT). An SH3 domain is found at 285 to 344 (ADQPCCRGLYDFEPENEGELGFKEGDIITLTNQIDENWYEGMLRGESGFFPINYVEVIVP).

This sequence belongs to the endophilin family. As to quaternary structure, interacts with ARC, DNM1, SGIP1, SYNJ1 and DYDC1. Interacts with FASLG. Interacts with ATXN2. Interacts with BIN2.

It localises to the cytoplasm. It is found in the early endosome membrane. Its function is as follows. Implicated in endocytosis. May recruit other proteins to membranes with high curvature. This chain is Endophilin-A3 (Sh3gl3), found in Mus musculus (Mouse).